The chain runs to 151 residues: Nucleoside diphosphate kinase (151 aa).

Residues Lys11, Phe59, Arg87, Arg104, and Asn114 each contribute to the ATP site. The Pros-phosphohistidine intermediate role is filled by His117.

This sequence belongs to the NDK family. Homotrimer. Mg(2+) serves as cofactor.

It carries out the reaction a 2'-deoxyribonucleoside 5'-diphosphate + ATP = a 2'-deoxyribonucleoside 5'-triphosphate + ADP. The enzyme catalyses a ribonucleoside 5'-diphosphate + ATP = a ribonucleoside 5'-triphosphate + ADP. Its function is as follows. Major role in the synthesis of nucleoside triphosphates other than ATP. The ATP gamma phosphate is transferred to the NDP beta phosphate via a ping-pong mechanism, using a phosphorylated active-site intermediate. This Schizosaccharomyces pombe (strain 972 / ATCC 24843) (Fission yeast) protein is Nucleoside diphosphate kinase (ndk1).